A 171-amino-acid polypeptide reads, in one-letter code: Putative pre-16S rRNA nuclease (171 aa).

The protein belongs to the YqgF nuclease family.

Its subcellular location is the cytoplasm. In terms of biological role, could be a nuclease involved in processing of the 5'-end of pre-16S rRNA. The sequence is that of Putative pre-16S rRNA nuclease from Corynebacterium diphtheriae (strain ATCC 700971 / NCTC 13129 / Biotype gravis).